We begin with the raw amino-acid sequence, 379 residues long: DnaJ homolog subfamily B member 14 (379 aa).

The Cytoplasmic portion of the chain corresponds to 1-244; the sequence is MEGNRDEAEK…GHEREEERAD (244 aa). The disordered stretch occupies residues 56 to 90; it reads TAGSSTHCRKPPGSSDQSKPSCGKDGTSGAGEGGK. The J domain maps to 108-172; the sequence is NYYEVLGVTK…EKRKQYDLTG (65 aa). A helical transmembrane segment spans residues 245-265; the sequence is GGFSVFIQLMPIIVLILVSLL. Residues 266–379 lie on the Lumenal side of the membrane; that stretch reads SQLMVSNPPY…ERLTSLYKGG (114 aa).

Belongs to the DnaJ family. DNAJB12/DNAJB14 subfamily. As to quaternary structure, interacts (via J domain) with HSPA8/Hsc70. Forms a multiprotein complex, at least composed of DNAJB12, DNAJB14, HSPA8/Hsc70 and SGTA; interaction with DNAJB14 and HSPA8/Hsc70 is direct.

The protein localises to the endoplasmic reticulum membrane. Its subcellular location is the nucleus membrane. Acts as a co-chaperone with HSPA8/Hsc70; required to promote protein folding and trafficking, prevent aggregation of client proteins, and promote unfolded proteins to endoplasmic reticulum-associated degradation (ERAD) pathway. Acts by determining HSPA8/Hsc70's ATPase and polypeptide-binding activities. Can also act independently of HSPA8/Hsc70: together with DNAJB12, acts as a chaperone that promotes maturation of potassium channels KCND2 and KCNH2 by stabilizing nascent channel subunits and assembling them into tetramers. While stabilization of nascent channel proteins is dependent on HSPA8/Hsc70, the process of oligomerization of channel subunits is independent of HSPA8/Hsc70. When overexpressed, forms membranous structures together with DNAJB12 and HSPA8/Hsc70 within the nucleus; the role of these structures, named DJANGOs, is still unclear. The protein is DnaJ homolog subfamily B member 14 of Mus musculus (Mouse).